We begin with the raw amino-acid sequence, 97 residues long: YcgL domain-containing protein PA14_47450 (97 aa).

A YcgL domain is found at 3 to 87 (RICSVYKSPR…GEEEYIEHLP (85 aa)).

This chain is YcgL domain-containing protein PA14_47450, found in Pseudomonas aeruginosa (strain UCBPP-PA14).